A 226-amino-acid polypeptide reads, in one-letter code: Uracil phosphoribosyltransferase (226 aa).

36-40 (KGLVK) serves as a coordination point for GTP. Residues Arg86, Arg111, and 145–153 (DPMLATGST) contribute to the 5-phospho-alpha-D-ribose 1-diphosphate site. Uracil-binding positions include Ile211 and 216–218 (GDA). 5-phospho-alpha-D-ribose 1-diphosphate is bound at residue Asp217.

Belongs to the UPRTase family. Mg(2+) serves as cofactor.

It catalyses the reaction UMP + diphosphate = 5-phospho-alpha-D-ribose 1-diphosphate + uracil. The protein operates within pyrimidine metabolism; UMP biosynthesis via salvage pathway; UMP from uracil: step 1/1. Allosterically activated by GTP. Functionally, catalyzes the conversion of uracil and 5-phospho-alpha-D-ribose 1-diphosphate (PRPP) to UMP and diphosphate. The sequence is that of Uracil phosphoribosyltransferase from Haloquadratum walsbyi (strain DSM 16790 / HBSQ001).